Consider the following 177-residue polypeptide: Large ribosomal subunit protein bL19 (177 aa).

Belongs to the bacterial ribosomal protein bL19 family.

Its function is as follows. This protein is located at the 30S-50S ribosomal subunit interface and may play a role in the structure and function of the aminoacyl-tRNA binding site. In Sinorhizobium medicae (strain WSM419) (Ensifer medicae), this protein is Large ribosomal subunit protein bL19.